The sequence spans 152 residues: Cytochrome c-type biogenesis protein CcmE (152 aa).

The Cytoplasmic segment spans residues 1–9 (MRGLKKQRR). The chain crosses the membrane as a helical; Signal-anchor for type II membrane protein span at residues 10–30 (IQILIVAAVALTLSSVLIGYA). Residues 31 to 152 (LRDGINFFRP…PDGYARDGDS (122 aa)) lie on the Periplasmic side of the membrane. Positions 123 and 127 each coordinate heme.

The protein belongs to the CcmE/CycJ family.

It is found in the cell inner membrane. Its function is as follows. Heme chaperone required for the biogenesis of c-type cytochromes. Transiently binds heme delivered by CcmC and transfers the heme to apo-cytochromes in a process facilitated by CcmF and CcmH. The chain is Cytochrome c-type biogenesis protein CcmE from Jannaschia sp. (strain CCS1).